Here is a 612-residue protein sequence, read N- to C-terminus: UvrABC system protein C (612 aa).

The GIY-YIG domain maps to 18–96 (TRPGVYRMMD…IKTLKPPYNI (79 aa)). Residues 208 to 243 (PEIINETIQQMEVASAQLDFERAAVLRDQVDYLRRV) form the UVR domain.

The protein belongs to the UvrC family. As to quaternary structure, interacts with UvrB in an incision complex.

The protein localises to the cytoplasm. Its function is as follows. The UvrABC repair system catalyzes the recognition and processing of DNA lesions. UvrC both incises the 5' and 3' sides of the lesion. The N-terminal half is responsible for the 3' incision and the C-terminal half is responsible for the 5' incision. This is UvrABC system protein C from Hahella chejuensis (strain KCTC 2396).